The sequence spans 469 residues: Glutamate--tRNA ligase 2 (469 aa).

Residues 8 to 18 (PSPTGFLHVGG) carry the 'HIGH' region motif. The 'KMSKS' region signature appears at 250 to 254 (KLSKR). Position 253 (Lys253) interacts with ATP.

The protein belongs to the class-I aminoacyl-tRNA synthetase family. Glutamate--tRNA ligase type 1 subfamily. As to quaternary structure, monomer.

Its subcellular location is the cytoplasm. It carries out the reaction tRNA(Glu) + L-glutamate + ATP = L-glutamyl-tRNA(Glu) + AMP + diphosphate. In terms of biological role, catalyzes the attachment of glutamate to tRNA(Glu) in a two-step reaction: glutamate is first activated by ATP to form Glu-AMP and then transferred to the acceptor end of tRNA(Glu). The polypeptide is Glutamate--tRNA ligase 2 (Thermotoga petrophila (strain ATCC BAA-488 / DSM 13995 / JCM 10881 / RKU-1)).